The sequence spans 380 residues: NADPH oxidoreductase (380 aa).

In terms of domain architecture, FAD-binding FR-type spans 58–164; it reads ARELRGRILG…AAPQGNFVLP (107 aa). Residues 299–380 enclose the 2Fe-2S ferredoxin-type domain; that stretch reads GTVTFARSGK…AASGDCVLDI (82 aa). Cys333, Cys338, Cys341, and Cys368 together coordinate [2Fe-2S] cluster.

Interacts with DesA3 to form a functional acyl-CoA desaturase complex. [2Fe-2S] cluster serves as cofactor. Requires FAD as cofactor.

The protein localises to the cell membrane. The protein operates within lipid metabolism; fatty acid metabolism. Its function is as follows. Is likely involved in the aerobic desaturation system responsible for the synthesis of oleic acid from stearoyl-CoA; oleic acid is a precursor of mycobacterial membrane phospholipids and triglycerides. Is the electron transfer partner for the stearoyl-CoA 9-desaturase DesA3. Catalyzes electron transfer reaction between NADPH and the diiron center of DesA3. Cannot use NADH. The sequence is that of NADPH oxidoreductase from Mycobacterium tuberculosis (strain ATCC 25618 / H37Rv).